A 98-amino-acid polypeptide reads, in one-letter code: Cysteine-rich and transmembrane domain-containing protein WIH2 (98 aa).

Residues 1–77 form a disordered region; the sequence is MSQYNQPPVG…PPQHQQQQSS (77 aa). Positions 9–21 are enriched in pro residues; it reads VGVPPPQGYPPEG. Residues 37–55 are compositionally biased toward low complexity; the sequence is YPQQGYPPQGYPQQGYPQQ. Pro residues predominate over residues 56-70; it reads GYPPPYAPQYPPPPQ. Residues 75–92 form a helical membrane-spanning segment; it reads QSSPGFLEGCLAALCCCC.

The protein belongs to the CYSTM1 family. Expressed in floral organ primordia.

The protein localises to the membrane. Functionally, required for the promotion of megasporogenesis, or promotion of germ cell formation from somatic precursor cells. Acts redundantly with WIH1. Functions in a genetic pathway downstream of SPL/NZZ and WUS and together with TRN2 in promoting megasporogenesis. The protein is Cysteine-rich and transmembrane domain-containing protein WIH2 of Arabidopsis thaliana (Mouse-ear cress).